We begin with the raw amino-acid sequence, 346 residues long: Actin-like protein 10 (346 aa).

Belongs to the actin family.

The polypeptide is Actin-like protein 10 (Actl10) (Mus musculus (Mouse)).